Reading from the N-terminus, the 246-residue chain is Probable septum site-determining protein MinC (246 aa).

The tract at residues 116 to 140 (AAVSPPPPPPARAEPAPPAARPAPG) is disordered. The segment covering 119–136 (SPPPPPPARAEPAPPAAR) has biased composition (pro residues).

This sequence belongs to the MinC family. In terms of assembly, interacts with MinD and FtsZ.

Cell division inhibitor that blocks the formation of polar Z ring septums. Rapidly oscillates between the poles of the cell to destabilize FtsZ filaments that have formed before they mature into polar Z rings. Prevents FtsZ polymerization. This is Probable septum site-determining protein MinC from Xanthomonas oryzae pv. oryzae (strain MAFF 311018).